A 186-amino-acid chain; its full sequence is Transposon Tn501 resolvase (186 aa).

Positions 4 to 137 (HRIGYVRVSS…EGITLAKQRG (134 aa)) constitute a Resolvase/invertase-type recombinase catalytic domain. The O-(5'-phospho-DNA)-serine intermediate role is filled by Ser12. The interval 17-38 (NPERQLEQTQVSKVFTDKASGK) is disordered. The segment at residues 164-183 (KAQLAREFNISRETLYQYLR) is a DNA-binding region (H-T-H motif).

This sequence belongs to the site-specific recombinase resolvase family.

Functionally, resolvase catalyzes the resolution (a site-specific recombination) of the cointegrated replicon to yield the final transposition products. The chain is Transposon Tn501 resolvase (tnpR) from Pseudomonas aeruginosa.